We begin with the raw amino-acid sequence, 330 residues long: Biotin synthase (330 aa).

Residues 42–268 (YYGRKVKLNM…INPSKEIRIA (227 aa)) form the Radical SAM core domain. The [4Fe-4S] cluster site is built by Cys-60, Cys-64, and Cys-67. Residues Cys-103, Cys-136, Cys-196, and Arg-266 each contribute to the [2Fe-2S] cluster site.

It belongs to the radical SAM superfamily. Biotin synthase family. In terms of assembly, homodimer. It depends on [4Fe-4S] cluster as a cofactor. Requires [2Fe-2S] cluster as cofactor.

The enzyme catalyses (4R,5S)-dethiobiotin + (sulfur carrier)-SH + 2 reduced [2Fe-2S]-[ferredoxin] + 2 S-adenosyl-L-methionine = (sulfur carrier)-H + biotin + 2 5'-deoxyadenosine + 2 L-methionine + 2 oxidized [2Fe-2S]-[ferredoxin]. The protein operates within cofactor biosynthesis; biotin biosynthesis; biotin from 7,8-diaminononanoate: step 2/2. Catalyzes the conversion of dethiobiotin (DTB) to biotin by the insertion of a sulfur atom into dethiobiotin via a radical-based mechanism. This chain is Biotin synthase, found in Macrococcus caseolyticus (strain JCSC5402) (Macrococcoides caseolyticum).